The sequence spans 219 residues: uncharacterized protein (219 aa).

The N-terminal stretch at 1 to 15 is a signal peptide; it reads MYVLFLLSWVLVAGA. Asparagine 118 carries N-linked (GlcNAc...) asparagine glycosylation. Residues 138–174 form a disordered region; that stretch reads GEVGEDPGKRARKRRLGLPIGEPGEDVGKRMRQRQQG.

Component of the acid-insoluble and acid-soluble organic matrix of calcified layers of the shell (at protein level).

Its subcellular location is the secreted. This is an uncharacterized protein from Lottia gigantea (Giant owl limpet).